The primary structure comprises 164 residues: Urocortin-3 (164 aa).

The first 23 residues, 1-23 (MLMPTYFLLPLLLLLGGPRTSLS), serve as a signal peptide directing secretion. Positions 24 to 121 (HKFYNTGPVF…PDKPKSDRGT (98 aa)) are excised as a propeptide. Positions 58–120 (SFGHLPTQDP…YPDKPKSDRG (63 aa)) are disordered. The segment covering 110–120 (LYPDKPKSDRG) has biased composition (basic and acidic residues). I160 carries the post-translational modification Isoleucine amide.

It belongs to the sauvagine/corticotropin-releasing factor/urotensin I family. Binds with high affinity to CRF receptors 2-alpha and 2-beta. As to expression, expressed in some areas of the brain including the hypothalamus, amygdala, and brainstem, but is not evident in the cerebellum, pituitary, or cerebral cortex; it is also expressed peripherally in small intestine and skin.

Its subcellular location is the secreted. Its function is as follows. Suppresses food intake, delays gastric emptying and decreases heat-induced edema. Might represent an endogenous ligand for maintaining homeostasis after stress. This Mus musculus (Mouse) protein is Urocortin-3 (Ucn3).